Here is a 796-residue protein sequence, read N- to C-terminus: Choline transporter-like 2 (796 aa).

Asn20 is a glycosylation site (N-linked (GlcNAc...) asparagine). Residues 35 to 55 form a helical membrane-spanning segment; it reads PCLLLFVLFLGGWAFIAQYAI. Asn209 and Asn284 each carry an N-linked (GlcNAc...) asparagine glycan. The next 4 helical transmembrane spans lie at 304 to 324, 332 to 352, 386 to 406, and 431 to 451; these read WSIV…YIAL, ILWF…YFSV, LYLS…VIVL, and VFFP…AIGV. 2 N-linked (GlcNAc...) asparagine glycosylation sites follow: Asn488 and Asn520. Transmembrane regions (helical) follow at residues 542 to 562, 585 to 605, 626 to 648, 691 to 711, and 724 to 744; these read VFGF…VLAS, FFQT…ILAI, AVTR…FLKF, FLFF…TYYF, and IAVP…VFFG.

It belongs to the CTL (choline transporter-like) family.

It localises to the membrane. The sequence is that of Choline transporter-like 2 from Drosophila melanogaster (Fruit fly).